The sequence spans 513 residues: uncharacterized protein (513 aa).

Basic and acidic residues predominate over residues 1–16 (MPREHDSKYHRERDMR). The tract at residues 1-21 (MPREHDSKYHRERDMRSGLQE) is disordered.

This is an uncharacterized protein from Sinorhizobium fredii (strain NBRC 101917 / NGR234).